Here is a 550-residue protein sequence, read N- to C-terminus: Putative golgin subfamily A member 6-like protein 19 (550 aa).

The segment covering 1–11 (MWPQPRLPPHP) has biased composition (pro residues). A disordered region spans residues 1–77 (MWPQPRLPPH…DSATGVYGEG (77 aa)). The span at 51–62 (NGSSPDTATSGG) shows a compositional bias: polar residues. The stretch at 157 to 405 (SKVEQLQDET…QERLRQQDER (249 aa)) forms a coiled coil. The segment covering 467–480 (KELEKSGGAEEPRG) has biased composition (basic and acidic residues). A disordered region spans residues 467-529 (KELEKSGGAE…VGTGEAAGGA (63 aa)). Composition is skewed to low complexity over residues 484-499 (AAAARPVPGAPVPQGA) and 517-529 (GEAVGTGEAAGGA).

This sequence belongs to the GOLGA6 family.

The polypeptide is Putative golgin subfamily A member 6-like protein 19 (GOLGA6L19) (Homo sapiens (Human)).